The sequence spans 177 residues: MTRGFYIGRFQPFHTGHRRVIEQIATEVDELVVGIGSAGDSHSARNPFTAGERIMMITKALVEFNLVTYAVPIEDLERNAVWVSHVRSMCPKFEVAYSNNPLVIRLFNEAAVEVRQPPMYDRDVLEGAEIRRRMADGDDWESLVPDAVADVVAEIDGVERIQHVADTDANGHDSGLR.

This sequence belongs to the archaeal NMN adenylyltransferase family.

It localises to the cytoplasm. It carries out the reaction beta-nicotinamide D-ribonucleotide + ATP + H(+) = diphosphate + NAD(+). It participates in cofactor biosynthesis; NAD(+) biosynthesis; NAD(+) from nicotinamide D-ribonucleotide: step 1/1. The sequence is that of Nicotinamide-nucleotide adenylyltransferase from Halobacterium salinarum (strain ATCC 29341 / DSM 671 / R1).